Reading from the N-terminus, the 925-residue chain is Glutamate receptor 3.1 (925 aa).

The signal sequence occupies residues 1-25 (MLSSMNWVLLSFIIVLGGGLLLSEG). The Extracellular segment spans residues 26–591 (ASSSRPPVIK…NPWAFLRPFT (566 aa)). 6 N-linked (GlcNAc...) asparagine glycosylation sites follow: N309, N341, N359, N419, N437, and N488. Residues 592–612 (LPMWAVTASFFVIVGAAIWIL) traverse the membrane as a helical segment. At 613 to 621 (EHRINDEFR) the chain is on the cytoplasmic side. Residues 622–642 (GPPRRQIITILWFTFSTMFFS) form a helical membrane-spanning segment. At 643–653 (HRETTVSTLGR) the chain is on the cytoplasmic side. Residues 654–674 (MVLLIWLFVVLIITSSYTASL) form a helical membrane-spanning segment. At 675–831 (TSILTVQQLN…GDSEQLNVHS (157 aa)) the chain is on the extracellular side. Residues N738 and N812 are each glycosylated (N-linked (GlcNAc...) asparagine). Residues 832–852 (FWGMFLVVGIACLVALFIHFF) traverse the membrane as a helical segment. Topologically, residues 853 to 925 (KIIRDFCKDT…ISRTASRRPI (73 aa)) are cytoplasmic. The tract at residues 897–925 (KRRLKRKRNNDHSMNANSIISRTASRRPI) is disordered. Positions 908–919 (HSMNANSIISRT) are enriched in polar residues.

This sequence belongs to the glutamate-gated ion channel (TC 1.A.10.1) family. In terms of assembly, may form heteromers. Expressed predominantly in roots. Firt detected in the vascular tissues of the cotyledons, and later in the vasculature of all organs. In leaves, preferentially expressed in guard cells.

It is found in the membrane. Glutamate-gated receptor that probably acts as a non-selective cation channel. May be involved in light-signal transduction and calcium homeostasis via the regulation of calcium influx into cells. Required for the long-term calcium oscillation-regulated stomatal movements. The chain is Glutamate receptor 3.1 (GLR3.1) from Arabidopsis thaliana (Mouse-ear cress).